Reading from the N-terminus, the 590-residue chain is Aspartate--tRNA(Asp/Asn) ligase (590 aa).

Residue glutamate 175 participates in L-aspartate binding. The aspartate stretch occupies residues 199-202 (QQYK). Residues arginine 221 and histidine 450 each coordinate L-aspartate. 221–223 (RDE) provides a ligand contact to ATP. Position 484 (glutamate 484) interacts with ATP. Arginine 491 contributes to the L-aspartate binding site. An ATP-binding site is contributed by 536-539 (GVDR).

This sequence belongs to the class-II aminoacyl-tRNA synthetase family. Type 1 subfamily. Homodimer.

It localises to the cytoplasm. It catalyses the reaction tRNA(Asx) + L-aspartate + ATP = L-aspartyl-tRNA(Asx) + AMP + diphosphate. Aspartyl-tRNA synthetase with relaxed tRNA specificity since it is able to aspartylate not only its cognate tRNA(Asp) but also tRNA(Asn). Reaction proceeds in two steps: L-aspartate is first activated by ATP to form Asp-AMP and then transferred to the acceptor end of tRNA(Asp/Asn). This is Aspartate--tRNA(Asp/Asn) ligase from Rhodopseudomonas palustris (strain HaA2).